Consider the following 4023-residue polypeptide: Hybrid PKS-NRPS synthetase pvhA (4023 aa).

Residues 7–440 form the Ketosynthase family 3 (KS3) domain; it reads DERIAVIGTG…GTNAHAIIEE (434 aa). Residues cysteine 180, histidine 319, and histidine 360 each act as for beta-ketoacyl synthase activity in the active site. The segment at 550-871 is malonyl-CoA:ACP transacylase (MAT) domain; it reads VFTGQGAQWA…PYVGLLGRGK (322 aa). Positions 945–1080 are N-terminal hotdog fold; it reads HPLLGKRCYD…GVVRATLAEN (136 aa). The tract at residues 945–1249 is dehydratase (DH) domain; sequence HPLLGKRCYD…QAEGLEIVPL (305 aa). Positions 945-1255 constitute a PKS/mFAS DH domain; the sequence is HPLLGKRCYD…IVPLAAAVPD (311 aa). Histidine 978 (proton acceptor; for dehydratase activity) is an active-site residue. Residues 1099-1255 form a C-terminal hotdog fold region; the sequence is DLSPVDTERF…IVPLAAAVPD (157 aa). The active-site Proton donor; for dehydratase activity is aspartate 1160. A methyltransferase (MT) domain region spans residues 1402–1585; that stretch reads AELYEKAIGF…GFSGTDTISP (184 aa). The segment at 2120-2291 is ketoreductase (KR) domain; sequence TYLLVGLTGE…GVAGSSINIS (172 aa). Residues 2404-2479 form the Carrier 1 domain; it reads SIIKEVFLAR…GIIKQVVELL (76 aa). Serine 2439 is subject to O-(pantetheine 4'-phosphoryl)serine. Residues 2490 to 2580 form a disordered region; that stretch reads TPQTLSKNPA…VMSKPSASSQ (91 aa). The span at 2502–2529 shows a compositional bias: low complexity; it reads PVKAPVSAPSTPAAASQPVLTDSTASSS. Residues 2565–2580 show a composition bias toward polar residues; it reads PVNTPNVMSKPSASSQ. Positions 2604–3043 are condensation (C) domain; that stretch reads PMSHGQEGFW…DIPSWSELDI (440 aa). Residues 3072–3467 form an adenylation (A) (KR) domain region; that stretch reads EMITVHGSTT…DGTLVVEGRL (396 aa). In terms of domain architecture, Carrier 2 spans 3593–3670; it reads SVLSGTERQL…AMADAVQKEV (78 aa). O-(pantetheine 4'-phosphoryl)serine is present on serine 3630. A reductase (RED) domain region spans residues 3783–3932; that stretch reads ETDVIMHCVA…IAPVDDMAQS (150 aa).

It in the C-terminal section; belongs to the NRP synthetase family.

Its pathway is secondary metabolite biosynthesis. Functionally, hybrid PKS-NRPS synthetase; part of the gene cluster that mediates the biosynthesis of varicidin A, an antifungal natural product containing a cis-octahydrodecalin core. The PKS module of pvhA together with the enoylreductase pvhC catalyze the formation of the polyketide unit which is then conjugated to L-isoleucine by the condensation domain of the NRPS module. Activity of the Dieckmann cyclase domain (RED) of pvhA results in release of an acyclic tetramate. The cytochrome P450 monooxygenase pvhE then catalyzes the oxidation of the C21 methyl group to a to carboxylate group. The methyltransferase pvhD then further methylates the pvhE product. The Diels-Alderase pvhB is able to catalyze Diels-Alder cycloaddition using both pvhE and pvhD products as substrates to form the decalin ring, yielding varicidin B and A, respectively. The sequence is that of Hybrid PKS-NRPS synthetase pvhA from Talaromyces variabilis (Penicillium variabile).